We begin with the raw amino-acid sequence, 73 residues long: Mu-scoloptoxin(15)-Ssd1a (73 aa).

Positions 1-20 are cleaved as a signal peptide; that stretch reads MKFHIIFCLLAALMMTSAFA.

In terms of processing, contains 2 disulfide bonds. In terms of tissue distribution, expressed by the venom gland.

The protein resides in the secreted. In terms of biological role, voltage-gated sodium channel inhibitor. The protein is Mu-scoloptoxin(15)-Ssd1a of Scolopendra dehaani (Thai centipede).